Consider the following 226-residue polypeptide: Large ribosomal subunit protein uL1 (226 aa).

It belongs to the universal ribosomal protein uL1 family. In terms of assembly, part of the 50S ribosomal subunit.

Functionally, binds directly to 23S rRNA. The L1 stalk is quite mobile in the ribosome, and is involved in E site tRNA release. Its function is as follows. Protein L1 is also a translational repressor protein, it controls the translation of the L11 operon by binding to its mRNA. The protein is Large ribosomal subunit protein uL1 of Mycoplasmoides gallisepticum (strain R(low / passage 15 / clone 2)) (Mycoplasma gallisepticum).